Here is an 890-residue protein sequence, read N- to C-terminus: DNA mismatch repair protein MutS (890 aa).

Residue 646–653 participates in ATP binding; it reads GPNMAGKS.

The protein belongs to the DNA mismatch repair MutS family.

Functionally, this protein is involved in the repair of mismatches in DNA. It is possible that it carries out the mismatch recognition step. This protein has a weak ATPase activity. This chain is DNA mismatch repair protein MutS, found in Hyphomonas neptunium (strain ATCC 15444).